We begin with the raw amino-acid sequence, 418 residues long: MSLLALGINHNTASVALRERVAFGPDCIDRALRELVTQPGVSEAVIVSTCNRTELYCSLEKGQGEQVLHWLQRFHGLDAAEVVSAIYQHQDEEAVRHLMRVACGLDSLVLGEPQILGQIKQSYAHAQQSEAVKGSLERLFQKSFSVAKRVRTDTEIGASAVSVAFAAVSLGRRIFSDLSQTKVLLVGAGETIELVARHLREQNVTRMMVANRTLQRAQLLAEEFGAQVMTLEEIPDYLHEADIVISSTASPLPIIGKGMVERALKARRFKPMFLVDIAVPRDIEAEVDELSDAYLYTVDDLQGIIEQNLETRKRAAAEAEIIVLEERDEFMGWYRSQHSVDLIRDYRHQAQQVADEELQRALLSLQQGENAEQALKAMAHRLTNKLIHAPTQALRQAAAQGDHHQLSRLRQVLGLPQE.

Residues 49-52 (TCNR), S107, 112-114 (EPQ), and Q118 contribute to the substrate site. Catalysis depends on C50, which acts as the Nucleophile. 187 to 192 (GAGETI) is an NADP(+) binding site.

The protein belongs to the glutamyl-tRNA reductase family. Homodimer.

The catalysed reaction is (S)-4-amino-5-oxopentanoate + tRNA(Glu) + NADP(+) = L-glutamyl-tRNA(Glu) + NADPH + H(+). The protein operates within porphyrin-containing compound metabolism; protoporphyrin-IX biosynthesis; 5-aminolevulinate from L-glutamyl-tRNA(Glu): step 1/2. Functionally, catalyzes the NADPH-dependent reduction of glutamyl-tRNA(Glu) to glutamate 1-semialdehyde (GSA). The polypeptide is Glutamyl-tRNA reductase (Aeromonas salmonicida (strain A449)).